The following is a 135-amino-acid chain: Nitrogen fixation protein NifU 1 (135 aa).

Basic and acidic residues predominate over residues 1 to 10 (MRDMQDDDTK). Residues 1–29 (MRDMQDDDTKSPAPPPAAAAAARRAAGQA) are disordered. Positions 18-29 (AAAAARRAAGQA) are enriched in low complexity.

This sequence belongs to the NifU family.

Its function is as follows. May be involved in the formation or repair of [Fe-S] clusters present in iron-sulfur proteins. This is Nitrogen fixation protein NifU 1 (nifU1) from Rhodobacter capsulatus (Rhodopseudomonas capsulata).